The sequence spans 461 residues: Transforming growth factor beta-1-induced transcript 1 protein (461 aa).

An N-acetylmethionine modification is found at M1. Residues 1–87 (MEDLDALLSD…PFSSSSGVLG (87 aa)) are disordered. A transcription activation region spans residues 1 to 200 (MEDLDALLSD…GCPSPPGQTS (200 aa)). Residues 1-240 (MEDLDALLSD…CNKPIAGQVV (240 aa)) are interaction with PTK2B/PYK2. The LD motif 1 signature appears at 3-15 (DLDALLSDLETTT). The residue at position 33 (T33) is a Phosphothreonine. Y38 carries the phosphotyrosine modification. Residues 44–53 (TGSGESSGTT) are compositionally biased toward low complexity. At Y60 the chain carries Phosphotyrosine. S68 carries the phosphoserine modification. The segment at 83 to 136 (SGVLGNGLCELDRLLQELNATQFNITDEIMSQFPSSKMAEGEEKEDQSEDKSSP) is interaction with PTK2/FAK1. Residues 92 to 104 (ELDRLLQELNATQ) carry the LD motif 2 motif. Residues 116-154 (PSSKMAEGEEKEDQSEDKSSPTVPPSPFPAPSKPSATSA) are disordered. Residues 137-147 (TVPPSPFPAPS) show a composition bias toward pro residues. S141, S164, and S186 each carry phosphoserine. The LD motif 3 motif lies at 157-168 (ELDRLMASLSDF). The interval 171-204 (QNHLPASGPPQPPAASPTREGCPSPPGQTSKGSL) is disordered. A Phosphothreonine modification is found at T188. A Phosphoserine modification is found at S194. The LD motif 4 signature appears at 203-215 (SLDTMLGLLQSDL). 4 consecutive LIM zinc-binding domains span residues 226 to 285 (GLCG…RFSP), 286 to 343 (RCGF…QLFA), 344 to 403 (PRCQ…QRGS), and 404 to 461 (LCAT…KLFG). Phosphoserine is present on S403. Position 407 is a phosphothreonine (T407).

The protein belongs to the paxillin family. As to quaternary structure, homooligomer. Interacts with PPARG. Interacts with TRAF4. Interacts with CRIP2. Interacts with HSPB1. Interacts with ILK. Interacts with LIMS1 and LIMS2. Interacts with NCK2. Interacts with NUDT16L1. Interacts with PAK. Interacts with PTPN12. Interacts with TCF3. Interacts with TCF7L2. Interacts with VCL. Interacts (via LD motif 3) with GIT1. Also interacts with GIT2. Forms a complex with ARHGEF7. Interacts with AR/androgen receptor in a ligand-dependent manner. Interacts with CSK. Interacts with PTK2/FAK1 and PTK2B/PYK2. Interacts with SLC6A3. Interacts with SLC6A4. Interacts with NR3C1. Interacts with SMAD3. Interacts with MAPK15. Interacts with SRC. Interacts with LYN. Interacts with talin. Interacts (via LIM zinc-binding domain 2) with CBLC (via RING-type zinc finger); the interaction is direct and enhances CBLC E3 ubiquitin-protein ligase activity. Interacts with PARVA. Interacts with PXN. Post-translationally, phosphorylated by gonadotropin-releasing hormone-activated SRC. Ubiquitously expressed. Higher expression is detected in lung and spleen. Expression decreases during pregnancy in mammary glands. Expressed in all brain areas, with higher levels in cerebellum, prefrontal cortex and hypothalamus. Expressed in smooth muscle, myoepithelial cells and platelets (at protein level). Preferentially expressed in mesenchymal versus epithelial cells (at protein level).

It localises to the cell junction. Its subcellular location is the focal adhesion. The protein resides in the nucleus matrix. It is found in the cytoplasm. The protein localises to the cytoskeleton. Functionally, functions as a molecular adapter coordinating multiple protein-protein interactions at the focal adhesion complex and in the nucleus. Links various intracellular signaling modules to plasma membrane receptors and regulates the Wnt and TGFB signaling pathways. May also regulate SLC6A3 and SLC6A4 targeting to the plasma membrane hence regulating their activity. In the nucleus, functions as a nuclear receptor coactivator regulating glucocorticoid, androgen, mineralocorticoid and progesterone receptor transcriptional activity. May play a role in the processes of cell growth, proliferation, migration, differentiation and senescence. May have a zinc-dependent DNA-binding activity. The sequence is that of Transforming growth factor beta-1-induced transcript 1 protein (Tgfb1i1) from Mus musculus (Mouse).